We begin with the raw amino-acid sequence, 112 residues long: Ribosome-binding factor A (112 aa).

Belongs to the RbfA family. As to quaternary structure, monomer. Binds 30S ribosomal subunits, but not 50S ribosomal subunits or 70S ribosomes.

The protein resides in the cytoplasm. In terms of biological role, one of several proteins that assist in the late maturation steps of the functional core of the 30S ribosomal subunit. Associates with free 30S ribosomal subunits (but not with 30S subunits that are part of 70S ribosomes or polysomes). Required for efficient processing of 16S rRNA. May interact with the 5'-terminal helix region of 16S rRNA. This chain is Ribosome-binding factor A, found in Mycoplasma genitalium (strain ATCC 33530 / DSM 19775 / NCTC 10195 / G37) (Mycoplasmoides genitalium).